The sequence spans 554 residues: Cytochrome P450 monooxygenase himC (554 aa).

Residues 52-72 (YSVASVAIAGFTALVVSVALY) form a helical membrane-spanning segment. Asparagine 110, asparagine 328, asparagine 414, and asparagine 425 each carry an N-linked (GlcNAc...) asparagine glycan. Cysteine 501 contacts heme.

This sequence belongs to the cytochrome P450 family. Heme is required as a cofactor.

It is found in the membrane. The protein operates within secondary metabolite biosynthesis. Functionally, cytochrome P450 monooxygenase; part of the him gene cluster that mediates the biosynthesis of himeic acid A, a ubiquitin-activating enzyme (E1) inhibitor. First, himA, together with the trans-enoyl reductase himH, catalyzes the formation of apolyketide chain, which is then condensed with leucine by the NRPS activity of himA. Dieckmann cyclization and release from himA gives a tetramic acid intermediate as the product of himA PKS-NRPS. HimG then catalyzes alpha-oxidation of the tetramic acid ring, with a subsequent rearrangement to yield apyrone intermediate. Two terminal methyl groups of polyketide and amide side chains are oxidized to carboxylic acids by himC cytochrome P450 monooxygenase to form himeic acid A. Himeic acid A is further converted to himeic acid B and C during culture growth. No gene responsible for pyrone to pyridone conversion was found in the him gene cluster and himeic acid A is non-enzymatically converted to himeic acid C by the incorporation of an ammonium nitrogen atom in a pH5 buffer, and to himeic acid B at a conversion ratio of 50% during incubation in MeOH for 5 days. This chain is Cytochrome P450 monooxygenase himC, found in Aspergillus japonicus.